A 184-amino-acid chain; its full sequence is dCTP deaminase (184 aa).

Residues 107 to 112, 131 to 133, Gln152, Tyr166, and Gln176 each bind dCTP; these read KSTYAR and TLE. Catalysis depends on Glu133, which acts as the Proton donor/acceptor.

This sequence belongs to the dCTP deaminase family. As to quaternary structure, homotrimer.

The catalysed reaction is dCTP + H2O + H(+) = dUTP + NH4(+). Its pathway is pyrimidine metabolism; dUMP biosynthesis; dUMP from dCTP (dUTP route): step 1/2. Catalyzes the deamination of dCTP to dUTP. The sequence is that of dCTP deaminase from Erythrobacter litoralis (strain HTCC2594).